The sequence spans 417 residues: Sulfite reductase, dissimilatory-type subunit alpha (417 aa).

[4Fe-4S] cluster-binding residues include cysteine 170, cysteine 176, cysteine 214, cysteine 218, cysteine 264, cysteine 284, cysteine 287, and cysteine 290. Residue cysteine 218 coordinates siroheme.

[4Fe-4S] cluster serves as cofactor. It depends on siroheme as a cofactor.

It catalyses the reaction [DsrC protein]-trisulfide + NAD(+) + 3 H2O = [DsrC protein]-dithiol + sulfite + NADH + 3 H(+). In terms of biological role, catalyzes the reduction of sulfite to sulfide. This is the terminal oxidation reaction in sulfate respiration. The chain is Sulfite reductase, dissimilatory-type subunit alpha (dsrA) from Allochromatium vinosum (strain ATCC 17899 / DSM 180 / NBRC 103801 / NCIMB 10441 / D) (Chromatium vinosum).